Here is a 796-residue protein sequence, read N- to C-terminus: Protein translocase subunit SecA 2 (796 aa).

Residues Gln84, Gly102–Thr106, and Asp496 contribute to the ATP site.

The protein belongs to the SecA family. Monomer and homodimer. Part of the essential Sec protein translocation apparatus which comprises SecA, SecYEG and auxiliary proteins SecDF. Other proteins may also be involved.

Its subcellular location is the cell membrane. It is found in the cytoplasm. The catalysed reaction is ATP + H2O + cellular proteinSide 1 = ADP + phosphate + cellular proteinSide 2.. Part of the Sec protein translocase complex. Interacts with the SecYEG preprotein conducting channel. Has a central role in coupling the hydrolysis of ATP to the transfer of proteins into and across the cell membrane, serving as an ATP-driven molecular motor driving the stepwise translocation of polypeptide chains across the membrane. This is Protein translocase subunit SecA 2 from Staphylococcus epidermidis (strain ATCC 12228 / FDA PCI 1200).